We begin with the raw amino-acid sequence, 310 residues long: Putative S-adenosyl-L-methionine-dependent methyltransferase MMAR_0357 (310 aa).

S-adenosyl-L-methionine-binding positions include D132 and 161-162 (DL).

Belongs to the UPF0677 family.

Functionally, exhibits S-adenosyl-L-methionine-dependent methyltransferase activity. In Mycobacterium marinum (strain ATCC BAA-535 / M), this protein is Putative S-adenosyl-L-methionine-dependent methyltransferase MMAR_0357.